The primary structure comprises 205 residues: 2-dehydro-3-deoxy-6-phosphogalactonate aldolase (205 aa).

Arg14 provides a ligand contact to 2-dehydro-3-deoxy-6-phospho-D-galactonate. The active-site Proton donor/acceptor is Glu37. Thr66, Lys126, Gly156, Gly176, and Ser177 together coordinate 2-dehydro-3-deoxy-6-phospho-D-galactonate. Residue Lys126 is the Schiff-base intermediate with substrate of the active site.

Belongs to the KHG/KDPG aldolase family. As to quaternary structure, homotrimer.

The enzyme catalyses 2-dehydro-3-deoxy-6-phospho-D-galactonate = D-glyceraldehyde 3-phosphate + pyruvate. It functions in the pathway carbohydrate acid metabolism; D-galactonate degradation; D-glyceraldehyde 3-phosphate and pyruvate from D-galactonate: step 3/3. In terms of biological role, involved in the degradation of galactose via the DeLey-Doudoroff pathway. Catalyzes the reversible, stereospecific retro-aldol cleavage of 2-keto-3-deoxy-6-phosphogalactonate (KDPGal) to pyruvate and D-glyceraldehyde-3-phosphate. In the synthetic direction, it catalyzes the addition of pyruvate to electrophilic aldehydes with re-facial selectivity. It can use a limited number of aldehyde substrates, including D-glyceraldehyde-3-phosphate (natural substrate), D-glyceraldehyde, glycolaldehyde, 2-pyridinecarboxaldehyde, D-ribose, D-erythrose and D-threose. It efficiently catalyzes aldol addition only using pyruvate as the nucleophilic component and accepts both stereochemical configurations at C2 of the electrophile. This is 2-dehydro-3-deoxy-6-phosphogalactonate aldolase (dgoA) from Escherichia coli (strain K12).